The following is a 241-amino-acid chain: Small ribosomal subunit protein uS3 (241 aa).

The region spanning V22 to E91 is the KH type-2 domain. A disordered region spans residues E218–Q241.

This sequence belongs to the universal ribosomal protein uS3 family. Part of the 30S ribosomal subunit.

Its function is as follows. Binds the lower part of the 30S subunit head. In Ignicoccus hospitalis (strain KIN4/I / DSM 18386 / JCM 14125), this protein is Small ribosomal subunit protein uS3.